Consider the following 98-residue polypeptide: MSLVYMNIMTAFAVSLTGLLMYRSHLMSSLLCLEGMMLSLFVMATLMILNSHFTLASMMPIILLVFAACEAALGLSLLVMVSNTYGTDYVQNLNLLQC.

A run of 3 helical transmembrane segments spans residues 1–21 (MSLVYMNIMTAFAVSLTGLLM), 29–49 (SLLCLEGMMLSLFVMATLMIL), and 61–81 (IILLVFAACEAALGLSLLVMV).

It belongs to the complex I subunit 4L family. Core subunit of respiratory chain NADH dehydrogenase (Complex I) which is composed of 45 different subunits.

It localises to the mitochondrion inner membrane. The catalysed reaction is a ubiquinone + NADH + 5 H(+)(in) = a ubiquinol + NAD(+) + 4 H(+)(out). Its function is as follows. Core subunit of the mitochondrial membrane respiratory chain NADH dehydrogenase (Complex I) which catalyzes electron transfer from NADH through the respiratory chain, using ubiquinone as an electron acceptor. Part of the enzyme membrane arm which is embedded in the lipid bilayer and involved in proton translocation. The protein is NADH-ubiquinone oxidoreductase chain 4L (MT-ND4L) of Pantholops hodgsonii (Chiru).